We begin with the raw amino-acid sequence, 816 residues long: Lon protease (816 aa).

In terms of domain architecture, Lon N-terminal spans 40-244; the sequence is VPLIAVPSHP…KVLELLYEEL (205 aa). Residue 398–405 coordinates ATP; sequence GPPGVGKT. One can recognise a Lon proteolytic domain in the interval 636–816; that stretch reads AMSPGMVMGL…SMKEVIKLLF (181 aa). Catalysis depends on residues Ser-724 and Lys-767.

It belongs to the peptidase S16 family. Homohexamer. Organized in a ring with a central cavity.

The protein localises to the cytoplasm. It catalyses the reaction Hydrolysis of proteins in presence of ATP.. Its function is as follows. ATP-dependent serine protease that mediates the selective degradation of mutant and abnormal proteins as well as certain short-lived regulatory proteins. Required for cellular homeostasis and for survival from DNA damage and developmental changes induced by stress. Degrades polypeptides processively to yield small peptide fragments that are 5 to 10 amino acids long. Binds to DNA in a double-stranded, site-specific manner. The protein is Lon protease of Borrelia duttonii (strain Ly).